The primary structure comprises 351 residues: Anthranilate phosphoribosyltransferase (351 aa).

5-phospho-alpha-D-ribose 1-diphosphate is bound by residues glycine 80, 83–84 (GD), threonine 88, 90–93 (NIST), 108–116 (KHGNRSVTS), and serine 120. Glycine 80 serves as a coordination point for anthranilate. Serine 92 is a Mg(2+) binding site. Asparagine 111 contributes to the anthranilate binding site. Arginine 166 is an anthranilate binding site. Mg(2+)-binding residues include aspartate 229 and glutamate 230.

It belongs to the anthranilate phosphoribosyltransferase family. As to quaternary structure, homodimer. It depends on Mg(2+) as a cofactor.

The catalysed reaction is N-(5-phospho-beta-D-ribosyl)anthranilate + diphosphate = 5-phospho-alpha-D-ribose 1-diphosphate + anthranilate. The protein operates within amino-acid biosynthesis; L-tryptophan biosynthesis; L-tryptophan from chorismate: step 2/5. Functionally, catalyzes the transfer of the phosphoribosyl group of 5-phosphorylribose-1-pyrophosphate (PRPP) to anthranilate to yield N-(5'-phosphoribosyl)-anthranilate (PRA). In Chlorobium limicola (strain DSM 245 / NBRC 103803 / 6330), this protein is Anthranilate phosphoribosyltransferase.